The sequence spans 230 residues: 7-cyano-7-deazaguanine synthase (230 aa).

Position 8-18 (8-18) interacts with ATP; it reads LSGGMDSAVVT. Residues Cys-186, Cys-196, Cys-199, and Cys-202 each coordinate Zn(2+).

This sequence belongs to the QueC family. Zn(2+) is required as a cofactor.

The enzyme catalyses 7-carboxy-7-deazaguanine + NH4(+) + ATP = 7-cyano-7-deazaguanine + ADP + phosphate + H2O + H(+). It functions in the pathway purine metabolism; 7-cyano-7-deazaguanine biosynthesis. In terms of biological role, catalyzes the ATP-dependent conversion of 7-carboxy-7-deazaguanine (CDG) to 7-cyano-7-deazaguanine (preQ(0)). The chain is 7-cyano-7-deazaguanine synthase from Xylella fastidiosa (strain M23).